The following is a 225-amino-acid chain: NAD(P)H-quinone oxidoreductase subunit K, chloroplastic (225 aa).

Positions 43, 44, 108, and 139 each coordinate [4Fe-4S] cluster.

This sequence belongs to the complex I 20 kDa subunit family. As to quaternary structure, NDH is composed of at least 16 different subunits, 5 of which are encoded in the nucleus. It depends on [4Fe-4S] cluster as a cofactor.

The protein localises to the plastid. It is found in the chloroplast thylakoid membrane. The catalysed reaction is a plastoquinone + NADH + (n+1) H(+)(in) = a plastoquinol + NAD(+) + n H(+)(out). It catalyses the reaction a plastoquinone + NADPH + (n+1) H(+)(in) = a plastoquinol + NADP(+) + n H(+)(out). Its function is as follows. NDH shuttles electrons from NAD(P)H:plastoquinone, via FMN and iron-sulfur (Fe-S) centers, to quinones in the photosynthetic chain and possibly in a chloroplast respiratory chain. The immediate electron acceptor for the enzyme in this species is believed to be plastoquinone. Couples the redox reaction to proton translocation, and thus conserves the redox energy in a proton gradient. In Oryza nivara (Indian wild rice), this protein is NAD(P)H-quinone oxidoreductase subunit K, chloroplastic.